The following is an 87-amino-acid chain: Putative regulatory protein BCG9842_B1272 (87 aa).

This sequence belongs to the RemA family.

The protein is Putative regulatory protein BCG9842_B1272 of Bacillus cereus (strain G9842).